The primary structure comprises 491 residues: Aspartyl/glutamyl-tRNA(Asn/Gln) amidotransferase subunit B (491 aa).

The protein belongs to the GatB/GatE family. GatB subfamily. As to quaternary structure, heterotrimer of A, B and C subunits.

The enzyme catalyses L-glutamyl-tRNA(Gln) + L-glutamine + ATP + H2O = L-glutaminyl-tRNA(Gln) + L-glutamate + ADP + phosphate + H(+). The catalysed reaction is L-aspartyl-tRNA(Asn) + L-glutamine + ATP + H2O = L-asparaginyl-tRNA(Asn) + L-glutamate + ADP + phosphate + 2 H(+). In terms of biological role, allows the formation of correctly charged Asn-tRNA(Asn) or Gln-tRNA(Gln) through the transamidation of misacylated Asp-tRNA(Asn) or Glu-tRNA(Gln) in organisms which lack either or both of asparaginyl-tRNA or glutaminyl-tRNA synthetases. The reaction takes place in the presence of glutamine and ATP through an activated phospho-Asp-tRNA(Asn) or phospho-Glu-tRNA(Gln). In Burkholderia ambifaria (strain ATCC BAA-244 / DSM 16087 / CCUG 44356 / LMG 19182 / AMMD) (Burkholderia cepacia (strain AMMD)), this protein is Aspartyl/glutamyl-tRNA(Asn/Gln) amidotransferase subunit B.